The following is a 190-amino-acid chain: 2-phospho-L-lactate guanylyltransferase (190 aa).

It belongs to the CofC family. Homodimer.

It carries out the reaction (2S)-2-phospholactate + GTP + H(+) = (2S)-lactyl-2-diphospho-5'-guanosine + diphosphate. It participates in cofactor biosynthesis; coenzyme F420 biosynthesis. Functionally, guanylyltransferase that catalyzes the activation of (2S)-2-phospholactate (2-PL) as (2S)-lactyl-2-diphospho-5'-guanosine, via the condensation of 2-PL with GTP. It is involved in the biosynthesis of coenzyme F420, a hydride carrier cofactor. The protein is 2-phospho-L-lactate guanylyltransferase of Methanopyrus kandleri (strain AV19 / DSM 6324 / JCM 9639 / NBRC 100938).